A 278-amino-acid chain; its full sequence is HTH-type transcriptional activator RhaS (278 aa).

Residues N174–G272 enclose the HTH araC/xylS-type domain. 2 DNA-binding regions (H-T-H motif) span residues E191 to T212 and V239 to F262.

Binds DNA as a dimer.

It is found in the cytoplasm. Functionally, activates expression of the rhaBAD and rhaT operons. This is HTH-type transcriptional activator RhaS from Salmonella schwarzengrund (strain CVM19633).